A 255-amino-acid chain; its full sequence is MWNPAVYLTYADHRGRPYYDLLSRVDAREPRRIVDLGCGPGNLTRTLTQRWPGAVVEAWDSSEEMVTAARERGVDARVGDVRDWAPLPDTDVVVSNATLHWVPEHPDLLLRWAGQLRAGSWIAFQVPGNFDAPSHRAVRDLVSSARWAHLLRDFPFEKSEVVRPAAGYAELLTDAGCTVDAWETTYVHELTGEKPVLEWIGGTALRPVRAALPDHDWQEFRAELIPLLDAAYPRRADGITFFPFRRIFVVARVKN.

Belongs to the methyltransferase superfamily. Tam family.

Its subcellular location is the cytoplasm. The enzyme catalyses trans-aconitate + S-adenosyl-L-methionine = (E)-3-(methoxycarbonyl)pent-2-enedioate + S-adenosyl-L-homocysteine. Catalyzes the S-adenosylmethionine monomethyl esterification of trans-aconitate. The sequence is that of Trans-aconitate 2-methyltransferase from Mycolicibacterium gilvum (strain PYR-GCK) (Mycobacterium gilvum (strain PYR-GCK)).